Here is a 163-residue protein sequence, read N- to C-terminus: D-aminoacyl-tRNA deacylase (163 aa).

The Gly-cisPro motif, important for rejection of L-amino acids motif lies at G141–P142.

This sequence belongs to the DTD family. In terms of assembly, homodimer.

It is found in the cytoplasm. The enzyme catalyses glycyl-tRNA(Ala) + H2O = tRNA(Ala) + glycine + H(+). It catalyses the reaction a D-aminoacyl-tRNA + H2O = a tRNA + a D-alpha-amino acid + H(+). In terms of biological role, an aminoacyl-tRNA editing enzyme that deacylates mischarged D-aminoacyl-tRNAs. Also deacylates mischarged glycyl-tRNA(Ala), protecting cells against glycine mischarging by AlaRS. Acts via tRNA-based rather than protein-based catalysis; rejects L-amino acids rather than detecting D-amino acids in the active site. By recycling D-aminoacyl-tRNA to D-amino acids and free tRNA molecules, this enzyme counteracts the toxicity associated with the formation of D-aminoacyl-tRNA entities in vivo and helps enforce protein L-homochirality. The chain is D-aminoacyl-tRNA deacylase from Neisseria gonorrhoeae (strain ATCC 700825 / FA 1090).